The sequence spans 505 residues: RNA-binding region-containing protein 3 (505 aa).

In terms of domain architecture, RRM 1 spans 15–90 (KTLIIRHLPR…RTLVVEFAKD (76 aa)). Disordered regions lie at residues 96–123 (ILKD…QPSV), 193–236 (PPMF…EEER), 354–374 (AQVP…SEFI), and 486–505 (ARSA…GRKH). Pro residues predominate over residues 193–214 (PPMFEMPSGPLPPPFPPENPPL). 2 stretches are compositionally biased toward acidic residues: residues 221–235 (GSEE…DEEE) and 361–370 (EEQEEDEDIP). In terms of domain architecture, RRM 2 spans 405-488 (CRLYVKNVAK…KPLVVQFARS (84 aa)). The span at 491-505 (PKQESADPKKGGRKH) shows a compositional bias: basic and acidic residues.

Component of the U11/U12 snRNPs that are part of the U12-type spliceosome.

It is found in the nucleus. Functionally, participates in pre-mRNA U12-dependent splicing, performed by the minor spliceosome which removes U12-type introns. U12-type introns comprise less than 1% of all non-coding sequences. This Danio rerio (Zebrafish) protein is RNA-binding region-containing protein 3.